The sequence spans 138 residues: ATP synthase epsilon chain (138 aa).

It belongs to the ATPase epsilon chain family. F-type ATPases have 2 components, CF(1) - the catalytic core - and CF(0) - the membrane proton channel. CF(1) has five subunits: alpha(3), beta(3), gamma(1), delta(1), epsilon(1). CF(0) has three main subunits: a, b and c.

The protein resides in the cell inner membrane. Functionally, produces ATP from ADP in the presence of a proton gradient across the membrane. The sequence is that of ATP synthase epsilon chain from Polynucleobacter necessarius subsp. necessarius (strain STIR1).